We begin with the raw amino-acid sequence, 474 residues long: MSFIPVEHIACSTAKLPSSRCPLLLLQPNGSSTKPVRWRSACNQCHAAKVRCSGERTGCDRCNNLQYQCVYAISRVGKVPGVRARGNKAVRTTTEALQRPATASTLPDADSTGEFQTDQRSENDPLSRSDFGEQDAAHDALSPKSHSALFPDWTEASDKSLNAYETADLFILPSQLMSSDQDPSRSRGHSLQAPSHSGHSIADSHTAAMPDGGLFCPFNKPTTPIPALPDLDLHIQDFHPMDVPVSPLDNGPPVKRRPYSDASCGHSGHSSKGYMSSTFPYSELLSQIGCQTDCGRQPHHYNYRSWTVLICNRIVEFLEHRIQGGVVALDVVMQTNKVTLGEISRILSKGAHKEGSNCAMLLLIAIDQIVTLFECGVKQGSPGDSDRASIGGRDLSALGDDLTGGNVLPNLRFGLFQINQDEQLALRSYLLQRELQRCLQVLTNLRDAIPLEPNPCTALEARVKKLCSAIADSH.

A DNA-binding region (zn(2)-C6 fungal-type) is located at residues 42-69 (CNQCHAAKVRCSGERTGCDRCNNLQYQC). Disordered regions lie at residues 85 to 148 (RGNK…SHSA) and 177 to 206 (MSSD…DSHT). A compositionally biased stretch (polar residues) spans 90 to 105 (VRTTTEALQRPATAST). Over residues 117-138 (TDQRSENDPLSRSDFGEQDAAH) the composition is skewed to basic and acidic residues.

It is found in the nucleus. In terms of biological role, transcription factor that specifically regulates the gene cluster that mediates the biosynthesis of aspirochlorine (or antibiotic A30641), an unusual halogenated spiro compound with distinctive antifungal properties due to selective inhibition of protein biosynthesis, and which is also active against bacteria, viruses, and murine tumor cells. The polypeptide is C6 finger domain transcription factor aclZ (Aspergillus oryzae (strain ATCC 42149 / RIB 40) (Yellow koji mold)).